The chain runs to 170 residues: Fimbrial protein (170 aa).

Residues Met-1–Gly-7 constitute a propeptide that is removed on maturation. Phe-8 bears the N-methylphenylalanine mark. A helical membrane pass occupies residues Phe-8–Leu-28. The O-linked (Gal...) serine glycan is linked to Ser-70. An O-(sn-1-glycerophosphoryl)serine modification is found at Ser-100. Cysteines 127 and 163 form a disulfide.

Belongs to the N-Me-Phe pilin family. The pili are polar flexible filaments of about 5.4 nanometers diameter and 2.5 micrometers average length; they consist of only a single polypeptide chain arranged in a helical configuration of five subunits per turn in the assembled pilus. In terms of processing, O-linked glycan consists of GlcNAc-Gal disaccharide.

It is found in the fimbrium. It localises to the membrane. Major component of the type IV pilus (T4P) that plays a role in cellular adherence, microcolony formation as well as twitching motility. The protein is Fimbrial protein (pilE) of Neisseria meningitidis serogroup A / serotype 4A (strain DSM 15465 / Z2491).